A 516-amino-acid chain; its full sequence is Bifunctional purine biosynthesis protein PurH (516 aa).

The region spanning 1–150 (MSDDRKQIKR…KNHPSVAVVV (150 aa)) is the MGS-like domain.

Belongs to the PurH family.

It catalyses the reaction (6R)-10-formyltetrahydrofolate + 5-amino-1-(5-phospho-beta-D-ribosyl)imidazole-4-carboxamide = 5-formamido-1-(5-phospho-D-ribosyl)imidazole-4-carboxamide + (6S)-5,6,7,8-tetrahydrofolate. It carries out the reaction IMP + H2O = 5-formamido-1-(5-phospho-D-ribosyl)imidazole-4-carboxamide. The protein operates within purine metabolism; IMP biosynthesis via de novo pathway; 5-formamido-1-(5-phospho-D-ribosyl)imidazole-4-carboxamide from 5-amino-1-(5-phospho-D-ribosyl)imidazole-4-carboxamide (10-formyl THF route): step 1/1. It functions in the pathway purine metabolism; IMP biosynthesis via de novo pathway; IMP from 5-formamido-1-(5-phospho-D-ribosyl)imidazole-4-carboxamide: step 1/1. The protein is Bifunctional purine biosynthesis protein PurH of Corynebacterium ammoniagenes (Brevibacterium ammoniagenes).